The primary structure comprises 301 residues: uncharacterized protein (301 aa).

It belongs to the asfivirus E301R family. Interacts with host IRF3.

Plays a role in the inhibition of host innate immune system by acting as a negatively regulator of type I interferon production. Mechanistically, interacts with and prevents host IRF3 nuclear localization to inhibit its transcriptional activity. This is an uncharacterized protein from African swine fever virus (strain Badajoz 1971 Vero-adapted) (Ba71V).